A 254-amino-acid polypeptide reads, in one-letter code: NADPH-dependent ferric-chelate reductase (254 aa).

In terms of domain architecture, FAD-binding FR-type spans leucine 15–proline 136.

The protein belongs to the SIP oxidoreductase family.

Its subcellular location is the cytoplasm. It catalyses the reaction 2 a Fe(II)-siderophore + NADP(+) + H(+) = 2 a Fe(III)-siderophore + NADPH. In terms of biological role, plays a role in iron homeostasis under excess nickel conditions. The sequence is that of NADPH-dependent ferric-chelate reductase (yqjH) from Escherichia coli (strain K12).